A 161-amino-acid polypeptide reads, in one-letter code: 18.1 kDa class I heat shock protein (161 aa).

Residues D45–A160 form the sHSP domain.

Belongs to the small heat shock protein (HSP20) family. As to quaternary structure, may form oligomeric structures. Binds to AKR2A.

The protein localises to the cytoplasm. In Arabidopsis thaliana (Mouse-ear cress), this protein is 18.1 kDa class I heat shock protein (HSP18.1).